A 300-amino-acid polypeptide reads, in one-letter code: ETS homologous factor (300 aa).

In terms of domain architecture, PNT spans 29–115 (STCNVSSGFF…SNLQHLKWNG (87 aa)). Residues 183 to 202 (ESPDMKKEQDPPAKCHTKKH) form a disordered region. Over residues 185-195 (PDMKKEQDPPA) the composition is skewed to basic and acidic residues. The segment at residues 207 to 289 (THLWEFIRDI…DGRRLVYKFG (83 aa)) is a DNA-binding region (ETS).

Belongs to the ETS family.

It localises to the nucleus. Its function is as follows. Transcriptional activator that may play a role in regulating epithelial cell differentiation and proliferation. May act as a repressor for a specific subset of ETS/AP-1-responsive genes, and as a modulator of the nuclear response to mitogen-activated protein kinase signaling cascades. Binds to DNA sequences containing the consensus nucleotide core sequence GGAA. Involved in regulation of TNFRSF10B/DR5 expression through Ets-binding sequences on the TNFRSF10B/DR5 promoter. This Pan troglodytes (Chimpanzee) protein is ETS homologous factor (EHF).